A 1007-amino-acid chain; its full sequence is Rho-type GTPase-activating protein 1 (1007 aa).

2 LIM zinc-binding domains span residues 13–66 (CVRC…CFDC) and 70–122 (CKNC…CLSC). Disordered regions lie at residues 203–293 (ITGY…KSPS), 401–478 (EKYS…STSL), and 505–600 (KETA…NDPS). Low complexity predominate over residues 212–221 (NSGSSKFGSN). Polar residues-rich tracts occupy residues 250–261 (ANMSLNVATDPT) and 270–293 (HSRNLLNKTPLRNSSGQYLAKSPS). Thr-278 carries the phosphothreonine modification. Ser-291 carries the post-translational modification Phosphoserine. The segment covering 411–421 (KGRKISRSLSR) has biased composition (basic residues). Over residues 454 to 466 (RSQDLMRDNDSHT) the composition is skewed to basic and acidic residues. Polar residues-rich tracts occupy residues 467 to 478 (GLDTPNSNSTSL) and 529 to 579 (SPAT…LENS). Thr-532 bears the Phosphothreonine mark. A compositionally biased stretch (basic and acidic residues) spans 583 to 600 (EEQKETLYENSESRNDPS). Positions 791 to 1006 (SSLVARCNYE…FIFGNYKDIL (216 aa)) constitute a Rho-GAP domain.

Its function is as follows. GTPase-activating protein (GAP) for CDC42 and/or RHO1. Negative regulator of the pheromone-response pathway through the STE20 protein kinase; acts at a step between the G-protein and the MAP kinase module. Dominant suppressor of bud emergence defect caused by deletion of IPL2/BEM2. Involved in the control of polarized cell growth and proper bud site selection. The sequence is that of Rho-type GTPase-activating protein 1 (RGA1) from Saccharomyces cerevisiae (strain ATCC 204508 / S288c) (Baker's yeast).